Consider the following 392-residue polypeptide: Succinyl-diaminopimelate desuccinylase (392 aa).

His71 contacts Zn(2+). The active site involves Asp73. Residue Asp102 participates in Zn(2+) binding. Glu144 (proton acceptor) is an active-site residue. Positions 145, 173, and 362 each coordinate Zn(2+).

Belongs to the peptidase M20A family. DapE subfamily. As to quaternary structure, homodimer. Requires Zn(2+) as cofactor. Co(2+) serves as cofactor.

It catalyses the reaction N-succinyl-(2S,6S)-2,6-diaminopimelate + H2O = (2S,6S)-2,6-diaminopimelate + succinate. It participates in amino-acid biosynthesis; L-lysine biosynthesis via DAP pathway; LL-2,6-diaminopimelate from (S)-tetrahydrodipicolinate (succinylase route): step 3/3. Its function is as follows. Catalyzes the hydrolysis of N-succinyl-L,L-diaminopimelic acid (SDAP), forming succinate and LL-2,6-diaminopimelate (DAP), an intermediate involved in the bacterial biosynthesis of lysine and meso-diaminopimelic acid, an essential component of bacterial cell walls. In Rhodospirillum rubrum (strain ATCC 11170 / ATH 1.1.1 / DSM 467 / LMG 4362 / NCIMB 8255 / S1), this protein is Succinyl-diaminopimelate desuccinylase.